We begin with the raw amino-acid sequence, 724 residues long: Catalase-peroxidase (724 aa).

The segment at residues Trp-98–Tyr-226 is a cross-link (tryptophyl-tyrosyl-methioninium (Trp-Tyr) (with M-252)). Residue His-99 is the Proton acceptor of the active site. Residues Tyr-226 to Met-252 constitute a cross-link (tryptophyl-tyrosyl-methioninium (Tyr-Met) (with W-98)). His-267 is a binding site for heme b.

This sequence belongs to the peroxidase family. Peroxidase/catalase subfamily. Homodimer or homotetramer. It depends on heme b as a cofactor. Post-translationally, formation of the three residue Trp-Tyr-Met cross-link is important for the catalase, but not the peroxidase activity of the enzyme.

The enzyme catalyses H2O2 + AH2 = A + 2 H2O. It carries out the reaction 2 H2O2 = O2 + 2 H2O. Functionally, bifunctional enzyme with both catalase and broad-spectrum peroxidase activity. The protein is Catalase-peroxidase of Psychromonas ingrahamii (strain DSM 17664 / CCUG 51855 / 37).